A 437-amino-acid chain; its full sequence is Dihydrofolate synthase/folylpolyglutamate synthase (437 aa).

Position 28-30 (28-30) interacts with 7,8-dihydropteroate; sequence DLG. 58 to 61 is an ATP binding site; the sequence is GKGT. Ser82 contributes to the Mg(2+) binding site. 120–123 lines the 7,8-dihydropteroate pocket; it reads TYFE. Glu144 is a Mg(2+) binding site. 151-153 is a binding site for 7,8-dihydropteroate; it reads LDA. Position 171 (His171) interacts with Mg(2+). Positions 255, 287, and 316 each coordinate ATP.

The protein belongs to the folylpolyglutamate synthase family. Monomer. It depends on Mg(2+) as a cofactor.

It catalyses the reaction 7,8-dihydropteroate + L-glutamate + ATP = 7,8-dihydrofolate + ADP + phosphate + H(+). The catalysed reaction is (6S)-5,6,7,8-tetrahydrofolyl-(gamma-L-Glu)(n) + L-glutamate + ATP = (6S)-5,6,7,8-tetrahydrofolyl-(gamma-L-Glu)(n+1) + ADP + phosphate + H(+). The enzyme catalyses 10-formyltetrahydrofolyl-(gamma-L-Glu)(n) + L-glutamate + ATP = 10-formyltetrahydrofolyl-(gamma-L-Glu)(n+1) + ADP + phosphate + H(+). It carries out the reaction (6R)-5,10-methylenetetrahydrofolyl-(gamma-L-Glu)(n) + L-glutamate + ATP = (6R)-5,10-methylenetetrahydrofolyl-(gamma-L-Glu)(n+1) + ADP + phosphate + H(+). The protein operates within cofactor biosynthesis; tetrahydrofolate biosynthesis; 7,8-dihydrofolate from 2-amino-4-hydroxy-6-hydroxymethyl-7,8-dihydropteridine diphosphate and 4-aminobenzoate: step 2/2. Its pathway is cofactor biosynthesis; tetrahydrofolylpolyglutamate biosynthesis. Functionally, functions in two distinct reactions of the de novo folate biosynthetic pathway. Catalyzes the addition of a glutamate residue to dihydropteroate (7,8-dihydropteroate or H2Pte) to form dihydrofolate (7,8-dihydrofolate monoglutamate or H2Pte-Glu). Also catalyzes successive additions of L-glutamate to tetrahydrofolate or 10-formyltetrahydrofolate or 5,10-methylenetetrahydrofolate, leading to folylpolyglutamate derivatives. The protein is Dihydrofolate synthase/folylpolyglutamate synthase (folC) of Haemophilus influenzae (strain ATCC 51907 / DSM 11121 / KW20 / Rd).